Here is a 630-residue protein sequence, read N- to C-terminus: Glutamyl-tRNA(Gln) amidotransferase subunit E (630 aa).

The protein belongs to the GatB/GatE family. GatE subfamily. As to quaternary structure, heterodimer of GatD and GatE.

It carries out the reaction L-glutamyl-tRNA(Gln) + L-glutamine + ATP + H2O = L-glutaminyl-tRNA(Gln) + L-glutamate + ADP + phosphate + H(+). Its function is as follows. Allows the formation of correctly charged Gln-tRNA(Gln) through the transamidation of misacylated Glu-tRNA(Gln) in organisms which lack glutaminyl-tRNA synthetase. The reaction takes place in the presence of glutamine and ATP through an activated gamma-phospho-Glu-tRNA(Gln). The GatDE system is specific for glutamate and does not act on aspartate. In Methanocaldococcus jannaschii (strain ATCC 43067 / DSM 2661 / JAL-1 / JCM 10045 / NBRC 100440) (Methanococcus jannaschii), this protein is Glutamyl-tRNA(Gln) amidotransferase subunit E.